Consider the following 536-residue polypeptide: Major facilitator superfamily domain-containing protein 4B (536 aa).

12 consecutive transmembrane segments (helical) span residues 19-39 (LTYW…GPTI), 53-73 (ITWV…SGGA), 81-101 (ALLA…IIPL), 105-125 (VLLL…IDTI), 140-160 (IFLQ…PLIA), 211-231 (YAFW…FVLM), 297-317 (FFLI…IMGV), 341-361 (LNCI…PLSY), 366-386 (VHLL…LMIL), 391-411 (VFLF…FPCL), 428-448 (VLVT…GTLI), and 456-476 (FLVC…SVIL).

This sequence belongs to the major facilitator superfamily.

The protein localises to the membrane. This is Major facilitator superfamily domain-containing protein 4B from Danio rerio (Zebrafish).